Reading from the N-terminus, the 378-residue chain is Putative glutamate--cysteine ligase 2 (378 aa).

Belongs to the glutamate--cysteine ligase type 2 family. YbdK subfamily.

The catalysed reaction is L-cysteine + L-glutamate + ATP = gamma-L-glutamyl-L-cysteine + ADP + phosphate + H(+). Its function is as follows. ATP-dependent carboxylate-amine ligase which exhibits weak glutamate--cysteine ligase activity. The polypeptide is Putative glutamate--cysteine ligase 2 (Jannaschia sp. (strain CCS1)).